The following is a 236-amino-acid chain: Biosynthetic peptidoglycan transglycosylase (236 aa).

A helical membrane pass occupies residues A12–P31.

It belongs to the glycosyltransferase 51 family.

Its subcellular location is the cell inner membrane. It catalyses the reaction [GlcNAc-(1-&gt;4)-Mur2Ac(oyl-L-Ala-gamma-D-Glu-L-Lys-D-Ala-D-Ala)](n)-di-trans,octa-cis-undecaprenyl diphosphate + beta-D-GlcNAc-(1-&gt;4)-Mur2Ac(oyl-L-Ala-gamma-D-Glu-L-Lys-D-Ala-D-Ala)-di-trans,octa-cis-undecaprenyl diphosphate = [GlcNAc-(1-&gt;4)-Mur2Ac(oyl-L-Ala-gamma-D-Glu-L-Lys-D-Ala-D-Ala)](n+1)-di-trans,octa-cis-undecaprenyl diphosphate + di-trans,octa-cis-undecaprenyl diphosphate + H(+). Its pathway is cell wall biogenesis; peptidoglycan biosynthesis. Functionally, peptidoglycan polymerase that catalyzes glycan chain elongation from lipid-linked precursors. The protein is Biosynthetic peptidoglycan transglycosylase of Pseudomonas syringae pv. syringae (strain B728a).